The following is a 41-amino-acid chain: Large ribosomal subunit protein bL36B (41 aa).

Belongs to the bacterial ribosomal protein bL36 family.

The polypeptide is Large ribosomal subunit protein bL36B (Vibrio campbellii (strain ATCC BAA-1116)).